The following is a 77-amino-acid chain: Liver-expressed antimicrobial peptide 2 (77 aa).

The signal sequence occupies residues Met-1–Gly-22. Positions Ser-23–Arg-37 are excised as a propeptide. 2 disulfides stabilise this stretch: Cys-54-Cys-65 and Cys-60-Cys-70.

This sequence belongs to the LEAP2 family.

The protein localises to the secreted. Functionally, has an antimicrobial activity. This is Liver-expressed antimicrobial peptide 2 (LEAP2) from Bos taurus (Bovine).